Reading from the N-terminus, the 478-residue chain is Probable glycine dehydrogenase (decarboxylating) subunit 2 (478 aa).

Lys-264 carries the N6-(pyridoxal phosphate)lysine modification.

This sequence belongs to the GcvP family. C-terminal subunit subfamily. As to quaternary structure, the glycine cleavage system is composed of four proteins: P, T, L and H. In this organism, the P 'protein' is a heterodimer of two subunits. Requires pyridoxal 5'-phosphate as cofactor.

The catalysed reaction is N(6)-[(R)-lipoyl]-L-lysyl-[glycine-cleavage complex H protein] + glycine + H(+) = N(6)-[(R)-S(8)-aminomethyldihydrolipoyl]-L-lysyl-[glycine-cleavage complex H protein] + CO2. Its function is as follows. The glycine cleavage system catalyzes the degradation of glycine. The P protein binds the alpha-amino group of glycine through its pyridoxal phosphate cofactor; CO(2) is released and the remaining methylamine moiety is then transferred to the lipoamide cofactor of the H protein. The polypeptide is Probable glycine dehydrogenase (decarboxylating) subunit 2 (Endomicrobium trichonymphae).